The primary structure comprises 486 residues: Transcription factor bHLH49 (486 aa).

Residues 1 to 17 show a composition bias toward basic and acidic residues; sequence MDLSAKDEFSAEKRNPD. Disordered stretches follow at residues 1–30 and 194–300; these read MDLS…GDWR and KEST…KDGY. 2 stretches are compositionally biased toward polar residues: residues 198–221 and 243–254; these read VRSS…TQSS and QKNSEAAQSHRS. The segment covering 273–293 has biased composition (low complexity); sequence QSPNSPGKKSNSGKQQGKQSS. The bHLH domain occupies 309 to 359; the sequence is QATNSHSLAERVRREKISERMKFLQDLVPGCNKVTGKAVMLDEIINYVQSL.

In terms of assembly, homodimer. Interacts with IBH1. In terms of tissue distribution, expressed constitutively in roots, stems, and flowers.

It is found in the nucleus. Its function is as follows. Transcriptional activator involved in cell elongation. Regulates the expression of a subset of genes involved in cell expansion by binding to the G-box motif. This chain is Transcription factor bHLH49 (BHLH49), found in Arabidopsis thaliana (Mouse-ear cress).